The following is a 467-amino-acid chain: Nuclear distribution protein PAC1 (467 aa).

The stretch at 62–96 forms a coiled coil; sequence GSIIRLQRAITKLEQKCDALQQELDDKTKQLETIV. WD repeat units lie at residues 121 to 160, 164 to 212, 219 to 262, 264 to 302, 325 to 365, 385 to 424, and 426 to 466; these read QNES…IPLA, AHSK…GELK, AHDS…QSFS, HSEW…SVGT, PYRD…LKPN, GHTS…KTWS, and IHNN…VKII.

It belongs to the WD repeat LIS1/nudF family. Self-associates. Interacts with NDL1 and dynein.

Its subcellular location is the cytoplasm. It is found in the cytoskeleton. It localises to the spindle pole. In terms of biological role, positively regulates the activity of the minus-end directed microtubule motor protein dynein. Plays a central role in positioning the mitotic spindle at the bud neck during cell division. Targets cytoplasmic dynein to microtubule plus ends, thereby promoting dynein-mediated microtubule sliding along the bud cortex and consequently the movement of the mitotic spindle to the bud neck. This is Nuclear distribution protein PAC1 from Candida glabrata (strain ATCC 2001 / BCRC 20586 / JCM 3761 / NBRC 0622 / NRRL Y-65 / CBS 138) (Yeast).